The following is a 246-amino-acid chain: uncharacterized protein (246 aa).

3 disordered regions span residues 29 to 54 (SLET…ENGS), 93 to 114 (LRRT…EDKF), and 148 to 246 (PIPP…SVVI). Positions 35–49 (PTSSSPSLSSNSDVS) are enriched in low complexity. Over residues 172 to 183 (RQQTNNIRTLHV) the composition is skewed to polar residues. Low complexity-rich tracts occupy residues 190–203 (SSSS…PSSS) and 214–225 (SKTTKNRSSNSS). An N-linked (GlcNAc...) asparagine glycan is attached at asparagine 219. Positions 235–246 (LTPSPTFESVVI) are enriched in polar residues.

This is an uncharacterized protein from Caenorhabditis elegans.